We begin with the raw amino-acid sequence, 195 residues long: Peptidyl-tRNA hydrolase (195 aa).

Residue tyrosine 18 participates in tRNA binding. The Proton acceptor role is filled by histidine 23. TRNA contacts are provided by tyrosine 69, asparagine 71, and asparagine 117.

The protein belongs to the PTH family. Monomer.

The protein resides in the cytoplasm. The enzyme catalyses an N-acyl-L-alpha-aminoacyl-tRNA + H2O = an N-acyl-L-amino acid + a tRNA + H(+). Hydrolyzes ribosome-free peptidyl-tRNAs (with 1 or more amino acids incorporated), which drop off the ribosome during protein synthesis, or as a result of ribosome stalling. Functionally, catalyzes the release of premature peptidyl moieties from peptidyl-tRNA molecules trapped in stalled 50S ribosomal subunits, and thus maintains levels of free tRNAs and 50S ribosomes. This chain is Peptidyl-tRNA hydrolase, found in Nitrosomonas europaea (strain ATCC 19718 / CIP 103999 / KCTC 2705 / NBRC 14298).